A 586-amino-acid chain; its full sequence is MARGYGATVSLVLLGLGLALAVIVLAVVLSRHQAPCGPQAFAHAAVAADSKVCSDIGRAILQQQGSPVDATIAALVCTSVVNPQSMGLGGGVIFTIYNVTTGKVEVINARETVPASHAPSLLDQCAQALPLGTGAQWIGVPGELRGYAEAHRRHGRLPWAQLFQPTIALLRGGHVVAPVLSRFLHNSILRPSLQASTLRQLFFNGTEPLRPQDPLPWPALATTLETVATEGVEVFYTGRLGQMLVEDIAKEGSQLTLQDLAKFQPEVVDALEVPLGDYTLYSPPPPAGGAILSFILNVLRGFNFSTESMARPEGRVNVYHHLVETLKFAKGQRWRLGDPRSHPKLQNASRDLLGETLAQLIRQQIDGRGDHQLSHYSLAEAWGHGTGTSHVSVLGEDGSAVAATSTINTPFGAMVYSPRTGIILNNELLDLCERCPRGSGTTPSPVSGDRVGGAPGRCWPPVPGERSPSSMVPSILINKAQGSKLVIGGAGGELIISAVAQAIMSKLWLGFDLRAAIAAPILHVNSKGCVEYEPNFSQEVQRGLQDRGQNQTQRPFFLNVVQAVSQEGACVYAVSDLRKSGEAAGY.

The Cytoplasmic portion of the chain corresponds to Met-1–Thr-8. A helical; Signal-anchor for type II membrane protein membrane pass occupies residues Val-9 to Leu-29. Topologically, residues Ser-30–Tyr-586 are extracellular. Asn-98 is a glycosylation site (N-linked (GlcNAc...) asparagine). Arg-110 is a binding site for L-glutamate. N-linked (GlcNAc...) asparagine glycosylation is found at Asn-204, Asn-303, and Asn-347. Catalysis depends on Thr-388, which acts as the Nucleophile. L-glutamate-binding positions include Thr-406, Glu-427, and Ser-469–Ser-470. 2 N-linked (GlcNAc...) asparagine glycosylation sites follow: Asn-535 and Asn-550.

The protein belongs to the gamma-glutamyltransferase family. Heterodimer composed of the light and heavy chains. The active site is located in the light chain. Post-translationally, cleaved by autocatalysis into a large and a small subunit. In terms of processing, glycosylated. Expressed in follicular dendritic cells in lymphoid follicles (at protein level).

It localises to the membrane. It carries out the reaction glutathione + H2O = L-cysteinylglycine + L-glutamate. The enzyme catalyses an S-substituted glutathione + H2O = an S-substituted L-cysteinylglycine + L-glutamate. It catalyses the reaction leukotriene C4 + H2O = leukotriene D4 + L-glutamate. The catalysed reaction is S-[(2E,6E,10E)-geranylgeranyl]-L-glutathione + H2O = S-[(2E,6E,10E)-geranylgeranyl]-L-cysteinylglycine + L-glutamate. It carries out the reaction an N-terminal (5-L-glutamyl)-[peptide] + an alpha-amino acid = 5-L-glutamyl amino acid + an N-terminal L-alpha-aminoacyl-[peptide]. It functions in the pathway sulfur metabolism; glutathione metabolism. It participates in lipid metabolism; leukotriene D4 biosynthesis. Inhibited by serine-borate. Cleaves the gamma-glutamyl bond of extracellular glutathione tripeptide (gamma-Glu-Cys-Gly) and certain glutathione conjugates. Hydrolyzes glutathione releasing L-Glu and Cys-Gly dipeptide which is further metabolized to maintain extracellular cysteine levels but also to provide cysteine necessary for intracellular glutathione synthesis. Among glutathione-S-conjugates metabolizes leukotriene C4 (LTC4) and S-geranylgeranyl-glutathione (GGG), but is inactive toward gamma-glutamyl leucine. Converts extracellular LTC4 to LTD4 during acute inflammatory response. Acts as a negative regulator of GGG bioactivity. GGT5 (via GGG catabolism) and ABCC1 (via extracellular transport) establish GGG gradients within lymphoid tissues to position P2RY8-positive lymphocytes at germinal centers in lymphoid follicles and restrict their chemotactic transmigration from blood vessels to bone marrow parenchyma. The transpeptidation reaction, i.e. the transfer of gamma-glutamyl moiety to an acceptor molecule to yield a new gamma-glutamyl compound requires high concentration of dipeptide acceptor and is considered nonphysiological. The polypeptide is Glutathione hydrolase 5 proenzyme (GGT5) (Homo sapiens (Human)).